A 180-amino-acid chain; its full sequence is Crossover junction endodeoxyribonuclease RuvC (180 aa).

Catalysis depends on residues Asp-7, Glu-66, and Asp-138. Mg(2+) is bound by residues Asp-7, Glu-66, and Asp-138.

The protein belongs to the RuvC family. As to quaternary structure, homodimer which binds Holliday junction (HJ) DNA. The HJ becomes 2-fold symmetrical on binding to RuvC with unstacked arms; it has a different conformation from HJ DNA in complex with RuvA. In the full resolvosome a probable DNA-RuvA(4)-RuvB(12)-RuvC(2) complex forms which resolves the HJ. It depends on Mg(2+) as a cofactor.

It localises to the cytoplasm. The catalysed reaction is Endonucleolytic cleavage at a junction such as a reciprocal single-stranded crossover between two homologous DNA duplexes (Holliday junction).. In terms of biological role, the RuvA-RuvB-RuvC complex processes Holliday junction (HJ) DNA during genetic recombination and DNA repair. Endonuclease that resolves HJ intermediates. Cleaves cruciform DNA by making single-stranded nicks across the HJ at symmetrical positions within the homologous arms, yielding a 5'-phosphate and a 3'-hydroxyl group; requires a central core of homology in the junction. The consensus cleavage sequence is 5'-(A/T)TT(C/G)-3'. Cleavage occurs on the 3'-side of the TT dinucleotide at the point of strand exchange. HJ branch migration catalyzed by RuvA-RuvB allows RuvC to scan DNA until it finds its consensus sequence, where it cleaves and resolves the cruciform DNA. The polypeptide is Crossover junction endodeoxyribonuclease RuvC (Burkholderia orbicola (strain MC0-3)).